We begin with the raw amino-acid sequence, 479 residues long: Glutamate--tRNA ligase 2 (479 aa).

The short motif at 18-28 is the 'HIGH' region element; the sequence is PSPTGFLHIGG. A 'KMSKS' region motif is present at residues 244 to 248; the sequence is KLSKR. Lys247 contacts ATP.

Belongs to the class-I aminoacyl-tRNA synthetase family. Glutamate--tRNA ligase type 1 subfamily. As to quaternary structure, monomer.

The protein resides in the cytoplasm. It carries out the reaction tRNA(Glu) + L-glutamate + ATP = L-glutamyl-tRNA(Glu) + AMP + diphosphate. Catalyzes the attachment of glutamate to tRNA(Glu) in a two-step reaction: glutamate is first activated by ATP to form Glu-AMP and then transferred to the acceptor end of tRNA(Glu). The protein is Glutamate--tRNA ligase 2 of Maricaulis maris (strain MCS10) (Caulobacter maris).